We begin with the raw amino-acid sequence, 307 residues long: Secondary metabolism regulator LAE1 (307 aa).

It belongs to the methyltransferase superfamily. LaeA methyltransferase family. As to quaternary structure, component of the heterotrimeric velvet complex composed of LAE1, VEL1 and VEL2; VEL1 acting as a bridging protein between LAE1 and VEL2.

The protein resides in the nucleus. It catalyses the reaction L-methionyl-[protein] + S-adenosyl-L-methionine = S-methyl-L-methionyl-[protein] + S-adenosyl-L-homocysteine. Functionally, methyltransferase that performs automethylation. No other methyl-accepting substrate has been identified yet. Component of the velvet transcription factor complex that acts as a global regulator for secondary metabolite gene expression. Controls the expression of the T-toxin gene cluster. Promotes oxidative stress tolerance and acts as a virulence factors during infection. Negatively regulate mycelial pigmentation and controls sexual development, as well as asexual development during vegetative growth. This Cochliobolus heterostrophus (strain C5 / ATCC 48332 / race O) (Southern corn leaf blight fungus) protein is Secondary metabolism regulator LAE1.